We begin with the raw amino-acid sequence, 35 residues long: Mu-theraphotoxin-Pn3b (35 aa).

3 disulfides stabilise this stretch: Cys2–Cys16, Cys9–Cys21, and Cys15–Cys28.

The protein belongs to the neurotoxin 10 (Hwtx-1) family. 28 (Jztx-11) subfamily. Expressed by the venom gland.

The protein resides in the secreted. Functionally, gating-modifier toxin that targets voltage-gated sodium channels with a preferential activity on Nav1.7/SCN9A. On Nav1.7/SCN9A, the toxin acts by shifting the voltage-dependence of activation to more depolarized potentials, whereas it does not cause significant effect on the voltage-dependence of activation on other sodium channels. Minor effects are observed on the voltage-dependence of steady-state fast inactivation for all sodium channels tested (Nav1.1/SCN1A-Nav1.8/SCN10A). By testing the toxin on channel chimera, it has been shown to interact with the S3-S4 linkers in DII and DIV domains of Nav1.7/SCN9A. In vivo, the toxin dose-dependently reduces OD1-induced spontaneous pain behaviors. This chain is Mu-theraphotoxin-Pn3b, found in Pamphobeteus nigricolor (Giant blue bloom tarantula).